The sequence spans 315 residues: Glycine--tRNA ligase alpha subunit (315 aa).

This sequence belongs to the class-II aminoacyl-tRNA synthetase family. In terms of assembly, tetramer of two alpha and two beta subunits.

The protein resides in the cytoplasm. The enzyme catalyses tRNA(Gly) + glycine + ATP = glycyl-tRNA(Gly) + AMP + diphosphate. In Pseudomonas putida (strain GB-1), this protein is Glycine--tRNA ligase alpha subunit.